A 303-amino-acid chain; its full sequence is ATP phosphoribosyltransferase (303 aa).

It belongs to the ATP phosphoribosyltransferase family. Long subfamily. It depends on Mg(2+) as a cofactor.

The protein localises to the cytoplasm. The catalysed reaction is 1-(5-phospho-beta-D-ribosyl)-ATP + diphosphate = 5-phospho-alpha-D-ribose 1-diphosphate + ATP. The protein operates within amino-acid biosynthesis; L-histidine biosynthesis; L-histidine from 5-phospho-alpha-D-ribose 1-diphosphate: step 1/9. Feedback inhibited by histidine. Its function is as follows. Catalyzes the condensation of ATP and 5-phosphoribose 1-diphosphate to form N'-(5'-phosphoribosyl)-ATP (PR-ATP). Has a crucial role in the pathway because the rate of histidine biosynthesis seems to be controlled primarily by regulation of HisG enzymatic activity. The protein is ATP phosphoribosyltransferase of Haemophilus influenzae (strain PittEE).